Reading from the N-terminus, the 210-residue chain is Large ribosomal subunit protein uL3 (210 aa).

The disordered stretch occupies residues 119-151 (FQGAIKRHGQSRGPMSHGSRYHRRPGSMGPVAP).

Belongs to the universal ribosomal protein uL3 family. In terms of assembly, part of the 50S ribosomal subunit. Forms a cluster with proteins L14 and L19.

In terms of biological role, one of the primary rRNA binding proteins, it binds directly near the 3'-end of the 23S rRNA, where it nucleates assembly of the 50S subunit. The protein is Large ribosomal subunit protein uL3 of Bacillus cytotoxicus (strain DSM 22905 / CIP 110041 / 391-98 / NVH 391-98).